Here is a 134-residue protein sequence, read N- to C-terminus: ATP synthase epsilon chain (134 aa).

Belongs to the ATPase epsilon chain family. F-type ATPases have 2 components, CF(1) - the catalytic core - and CF(0) - the membrane proton channel. CF(1) has five subunits: alpha(3), beta(3), gamma(1), delta(1), epsilon(1). CF(0) has three main subunits: a, b and c.

The protein resides in the cell membrane. Functionally, produces ATP from ADP in the presence of a proton gradient across the membrane. This Alkaliphilus oremlandii (strain OhILAs) (Clostridium oremlandii (strain OhILAs)) protein is ATP synthase epsilon chain.